The sequence spans 365 residues: Probable caffeine synthase 5 (365 aa).

Tyr18 provides a ligand contact to S-adenosyl-L-homocysteine. Thr25 is a binding site for caffeine. The S-adenosyl-L-homocysteine site is built by Cys61, Asn66, Asp98, Leu99, Ser134, and Phe135. Caffeine-binding residues include Tyr152, His155, and Trp156. Positions 173, 259, 261, and 262 each coordinate Mg(2+). Phe317 is a caffeine binding site.

It belongs to the methyltransferase superfamily. Type-7 methyltransferase family. It depends on Mg(2+) as a cofactor.

Its pathway is alkaloid biosynthesis. May be involved in the biosynthesis of caffeine. The protein is Probable caffeine synthase 5 of Camellia sinensis (Tea plant).